We begin with the raw amino-acid sequence, 201 residues long: Ras-related protein Rab-1B (201 aa).

Position 1 is an N-acetylmethionine (Met1). GTP contacts are provided by Ser17, Gly18, Val19, Gly20, Lys21, Ser22, Cys23, Tyr33, Thr34, Glu35, Ser36, Ser39, and Thr40. Ser22 is a binding site for Mg(2+). The short motif at 30 to 45 is the Switch 1 element; sequence DDTYTESYISTIGVDF. The Mg(2+) site is built by Thr40 and Asp63. Positions 64 to 83 are switch 2 region; required for interaction with REP1/CHM; it reads TAGQERGRTITSSYYRGAHG. Residues 65 to 80 carry the Switch 2 motif; it reads AGQERGRTITSSYYRG. Residues Gly66, Asn121, Lys122, Asp124, Ser151, Ala152, and Lys153 each coordinate GTP. A disordered region spans residues 173–201; sequence MGPGAASGGERPNLKIDSTPVKQAGGGCC. Residues Cys200 and Cys201 are each lipidated (S-geranylgeranyl cysteine). The residue at position 201 (Cys201) is a Cysteine methyl ester.

The protein belongs to the small GTPase superfamily. Rab family. Interacts with MICAL1 and MICAL2. Interacts (in GTP-bound form) with MICALCL, MICAL1 and MILCAL3. Interacts with GDI1; the interaction requires the GDP-bound state. Interacts with CHM/REP1; the interaction requires the GDP-bound form and is necessary for prenylation by GGTase II. Interacts with RabGAP TBC1D20. Interacts (in GDP-bound form) with lipid phosphatase MTMR6 (via GRAM domain); the interaction regulates MTMR6 recruitment to the endoplasmic reticulum-Golgi intermediate compartment. Interacts (in GDP-bound form) with lipid phosphatase MTMR7. The cofactor is Mg(2+). In terms of processing, prenylated; by GGTase II, only after interaction of the substrate with Rab escort protein 1 (REP1).

The protein localises to the cytoplasm. It localises to the membrane. The protein resides in the preautophagosomal structure membrane. It is found in the perinuclear region. The catalysed reaction is GTP + H2O = GDP + phosphate + H(+). Regulated by guanine nucleotide exchange factors (GEFs) which promote the exchange of bound GDP for free GTP. Regulated by GTPase activating proteins (GAPs) including TBC1D20 which increases the GTP hydrolysis activity. Inhibited by GDP dissociation inhibitors (GDIs). The small GTPases Rab are key regulators of intracellular membrane trafficking, from the formation of transport vesicles to their fusion with membranes. Rabs cycle between an inactive GDP-bound form and an active GTP-bound form that is able to recruit to membranes different set of downstream effectors directly responsible for vesicle formation, movement, tethering and fusion. Plays a role in the initial events of the autophagic vacuole development which take place at specialized regions of the endoplasmic reticulum. Regulates vesicular transport between the endoplasmic reticulum and successive Golgi compartments. Required to modulate the compacted morphology of the Golgi. Promotes the recruitment of lipid phosphatase MTMR6 to the endoplasmic reticulum-Golgi intermediate compartment. The chain is Ras-related protein Rab-1B (RAB1B) from Sus scrofa (Pig).